The chain runs to 787 residues: Transcription factor SOX-6 (787 aa).

Residues 1–46 (MSSKQATSPFACAADGEDAMTQDLTSREKEEGSDQHVASHLPLHPI) are disordered. Over residues 25–34 (TSREKEEGSD) the composition is skewed to basic and acidic residues. A Phosphothreonine modification is found at Thr-119. The stretch at 184–262 (LAEKERQLST…LLQQQIQVQG (79 aa)) forms a coiled coil. The interval 340–429 (PGAKMPSTPQ…KSSIPSPIGG (90 aa)) is disordered. Over residues 352–361 (NTAGTVSPTG) the composition is skewed to polar residues. Position 358 is a phosphoserine (Ser-358). Thr-360 bears the Phosphothreonine mark. Residues Lys-363 and Lys-376 each participate in a glycyl lysine isopeptide (Lys-Gly) (interchain with G-Cter in SUMO) cross-link. Phosphoserine is present on residues Ser-398 and Ser-401. Over residues 398-420 (SPTSPTQNLFPASKTSPVNLPNK) the composition is skewed to polar residues. A DNA-binding region (HMG box) is located at residues 580 to 648 (IKRPMNAFMV…IHLEKYPNYK (69 aa)). Residues 712 to 740 (TPSPQMTSDCSSTSASPEPSLPVIQSTYG) show a composition bias toward polar residues. Positions 712–787 (TPSPQMTSDC…NEAPEAVSAN (76 aa)) are disordered. Acidic residues predominate over residues 755 to 768 (NGEDEMEMYDDYED).

Homodimer. Interacts with DAZAP2. May interact with CENPK. In terms of processing, sumoylation inhibits the transcriptional activity.

The protein localises to the nucleus. Its subcellular location is the cytoplasm. Transcription factor that plays a key role in several developmental processes, including neurogenesis, chondrocytes differentiation and cartilage formation. Specifically binds the 5'-AACAAT-3' DNA motif present in enhancers and super-enhancers and promotes expression of genes important for chondrogenesis. Required for overt chondrogenesis when condensed prechondrocytes differentiate into early stage chondrocytes: SOX5 and SOX6 cooperatively bind with SOX9 on active enhancers and super-enhancers associated with cartilage-specific genes, and thereby potentiate SOX9's ability to transactivate. Not involved in precartilaginous condensation, the first step in chondrogenesis, during which skeletal progenitors differentiate into prechondrocytes. Together with SOX5, required to form and maintain a pool of highly proliferating chondroblasts between epiphyses and metaphyses, to form columnar chondroblasts, delay chondrocyte prehypertrophy but promote hypertrophy, and to delay terminal differentiation of chondrocytes on contact with ossification fronts. Binds to the proximal promoter region of the myelin protein MPZ gene, and is thereby involved in the differentiation of oligodendroglia in the developing spinal tube. Binds to the gene promoter of MBP and acts as a transcriptional repressor. This is Transcription factor SOX-6 from Pongo abelii (Sumatran orangutan).